The sequence spans 307 residues: Small ribosomal subunit biogenesis GTPase RsgA (307 aa).

The segment at 1–21 is disordered; it reads MPSEHPFSDGIPTPNPKETMN. One can recognise a CP-type G domain in the interval 85–242; that stretch reads RQDAWKTKLI…LIDSPGLQEF (158 aa). GTP is bound by residues 135 to 138 and 184 to 192; these read NKAD and GQSGMGKST. Cys-266, Cys-271, His-273, and Cys-279 together coordinate Zn(2+).

Belongs to the TRAFAC class YlqF/YawG GTPase family. RsgA subfamily. As to quaternary structure, monomer. Associates with 30S ribosomal subunit, binds 16S rRNA. It depends on Zn(2+) as a cofactor.

It is found in the cytoplasm. Its function is as follows. One of several proteins that assist in the late maturation steps of the functional core of the 30S ribosomal subunit. Helps release RbfA from mature subunits. May play a role in the assembly of ribosomal proteins into the subunit. Circularly permuted GTPase that catalyzes slow GTP hydrolysis, GTPase activity is stimulated by the 30S ribosomal subunit. This Neisseria meningitidis serogroup B (strain ATCC BAA-335 / MC58) protein is Small ribosomal subunit biogenesis GTPase RsgA.